A 217-amino-acid polypeptide reads, in one-letter code: Probable GTP-binding protein EngB (217 aa).

An EngB-type G domain is found at 29–213; sequence GPLEVAFAGR…RQAIAETVGI (185 aa). Residues 37-44, 64-68, 91-94, 158-161, and 192-194 contribute to the GTP site; these read GRSNVGKS, GRTQE, DMPG, TKTD, and TSS. Residues S44 and T66 each contribute to the Mg(2+) site.

Belongs to the TRAFAC class TrmE-Era-EngA-EngB-Septin-like GTPase superfamily. EngB GTPase family. Mg(2+) serves as cofactor.

Necessary for normal cell division and for the maintenance of normal septation. The chain is Probable GTP-binding protein EngB from Rhizobium johnstonii (strain DSM 114642 / LMG 32736 / 3841) (Rhizobium leguminosarum bv. viciae).